The primary structure comprises 333 residues: 4-hydroxy-3-methylbut-2-enyl diphosphate reductase (333 aa).

C20 contacts [4Fe-4S] cluster. The (2E)-4-hydroxy-3-methylbut-2-enyl diphosphate site is built by H49 and H85. Positions 49 and 85 each coordinate dimethylallyl diphosphate. H49 and H85 together coordinate isopentenyl diphosphate. Residue C107 coordinates [4Fe-4S] cluster. (2E)-4-hydroxy-3-methylbut-2-enyl diphosphate is bound at residue H135. Residue H135 coordinates dimethylallyl diphosphate. Isopentenyl diphosphate is bound at residue H135. E137 acts as the Proton donor in catalysis. (2E)-4-hydroxy-3-methylbut-2-enyl diphosphate is bound at residue T176. C206 contributes to the [4Fe-4S] cluster binding site. Residues S234, S235, N236, and S279 each contribute to the (2E)-4-hydroxy-3-methylbut-2-enyl diphosphate site. 4 residues coordinate dimethylallyl diphosphate: S234, S235, N236, and S279. The isopentenyl diphosphate site is built by S234, S235, N236, and S279.

Belongs to the IspH family. [4Fe-4S] cluster is required as a cofactor.

The enzyme catalyses isopentenyl diphosphate + 2 oxidized [2Fe-2S]-[ferredoxin] + H2O = (2E)-4-hydroxy-3-methylbut-2-enyl diphosphate + 2 reduced [2Fe-2S]-[ferredoxin] + 2 H(+). The catalysed reaction is dimethylallyl diphosphate + 2 oxidized [2Fe-2S]-[ferredoxin] + H2O = (2E)-4-hydroxy-3-methylbut-2-enyl diphosphate + 2 reduced [2Fe-2S]-[ferredoxin] + 2 H(+). Its pathway is isoprenoid biosynthesis; dimethylallyl diphosphate biosynthesis; dimethylallyl diphosphate from (2E)-4-hydroxy-3-methylbutenyl diphosphate: step 1/1. It functions in the pathway isoprenoid biosynthesis; isopentenyl diphosphate biosynthesis via DXP pathway; isopentenyl diphosphate from 1-deoxy-D-xylulose 5-phosphate: step 6/6. Functionally, catalyzes the conversion of 1-hydroxy-2-methyl-2-(E)-butenyl 4-diphosphate (HMBPP) into a mixture of isopentenyl diphosphate (IPP) and dimethylallyl diphosphate (DMAPP). Acts in the terminal step of the DOXP/MEP pathway for isoprenoid precursor biosynthesis. The sequence is that of 4-hydroxy-3-methylbut-2-enyl diphosphate reductase from Rhizobium johnstonii (strain DSM 114642 / LMG 32736 / 3841) (Rhizobium leguminosarum bv. viciae).